Here is a 351-residue protein sequence, read N- to C-terminus: MTKIKEIKKVLQQEDADAAWITTPLNIFYFTGYRSEPHERLFALLIPSNEEPVLFCPKMEVEEVKQSPFKGKIIGYLDTENPFDKYSKTFSKMLIESEHLTVKRQRELTKAFNIEHYQDVDQSIKDLRNIKSEDEIINIKKAAALADKCIEIGKSFLKEGVEEREVVNHIENEIKKYGVNEMSFDTMVLFGDHAASPHGTPGDRKLQQNEFVLFDLGVVYHHYCSDMTRTIHFGTPNKEAQNIYNIVLKAETEAIKSIKPGVTIKDIDKIARDIIEEAGYGDYFPHRLGHGLGLEEHEYQDISSVNNNQLEAGMVITIEPGIYVPHVAGVRIEDDILVTENGYEILTQYEK.

Positions 215, 226, 290, 319, and 333 each coordinate Mn(2+).

This sequence belongs to the peptidase M24B family. It depends on Mn(2+) as a cofactor.

This is an uncharacterized protein from Staphylococcus epidermidis (strain ATCC 35984 / DSM 28319 / BCRC 17069 / CCUG 31568 / BM 3577 / RP62A).